Here is a 353-residue protein sequence, read N- to C-terminus: Ribosomal RNA large subunit methyltransferase M (353 aa).

S-adenosyl-L-methionine-binding positions include S183, 216–219 (APGG), D235, D255, and D271. The active-site Proton acceptor is K300.

The protein belongs to the class I-like SAM-binding methyltransferase superfamily. RNA methyltransferase RlmE family. RlmM subfamily. Monomer.

It localises to the cytoplasm. The catalysed reaction is cytidine(2498) in 23S rRNA + S-adenosyl-L-methionine = 2'-O-methylcytidine(2498) in 23S rRNA + S-adenosyl-L-homocysteine + H(+). In terms of biological role, catalyzes the 2'-O-methylation at nucleotide C2498 in 23S rRNA. The protein is Ribosomal RNA large subunit methyltransferase M of Azotobacter vinelandii (strain DJ / ATCC BAA-1303).